The following is a 613-amino-acid chain: UvrABC system protein C (613 aa).

The GIY-YIG domain occupies 13-92 (DKSGVYIMKD…IKKYKPKYNI (80 aa)). The UVR domain maps to 204–239 (DEIINDLRIQMETAAEQLDFEKAAQLRNKITSIKQL).

This sequence belongs to the UvrC family. Interacts with UvrB in an incision complex.

Its subcellular location is the cytoplasm. The UvrABC repair system catalyzes the recognition and processing of DNA lesions. UvrC both incises the 5' and 3' sides of the lesion. The N-terminal half is responsible for the 3' incision and the C-terminal half is responsible for the 5' incision. The chain is UvrABC system protein C from Ruminiclostridium cellulolyticum (strain ATCC 35319 / DSM 5812 / JCM 6584 / H10) (Clostridium cellulolyticum).